The sequence spans 70 residues: MPRELTEIKEFLLTARRKDAKSVKIKKNPENTKFKVRCSRFLYTLVITDREKAEKLKQSLPPGLQVKEVK.

This sequence belongs to the eukaryotic ribosomal protein eL38 family.

In Timarcha balearica, this protein is Large ribosomal subunit protein eL38 (RpL38).